A 202-amino-acid polypeptide reads, in one-letter code: Imidazoleglycerol-phosphate dehydratase (202 aa).

This sequence belongs to the imidazoleglycerol-phosphate dehydratase family. Homotrimer.

The catalysed reaction is D-erythro-1-(imidazol-4-yl)glycerol 3-phosphate = 3-(imidazol-4-yl)-2-oxopropyl phosphate + H2O. It functions in the pathway amino-acid biosynthesis; L-histidine biosynthesis; L-histidine from 5-phospho-alpha-D-ribose 1-diphosphate: step 6/9. The sequence is that of Imidazoleglycerol-phosphate dehydratase (HIS3) from Cryptococcus neoformans var. neoformans serotype D (strain B-3501A) (Filobasidiella neoformans).